Reading from the N-terminus, the 467-residue chain is Ribosome biogenesis protein YTM1 (467 aa).

The tract at residues Ile-8–Arg-95 is ubiquitin-like (UBL) domain. The interval Ser-105–Lys-467 is sufficient for interaction with ERB1 and association with 66S pre-ribosomes. WD repeat units lie at residues Lys-120–Tyr-159, Gly-161–Pro-199, Gly-216–Ile-255, Ser-293–Thr-333, Ser-335–Glu-374, Gly-382–Thr-422, and Lys-432–Lys-467.

Belongs to the WD repeat WDR12/YTM1 family. In terms of assembly, component of the NOP7 complex, composed of ERB1, NOP7 and YTM1. The complex is held together by ERB1, which interacts with NOP7 via its N-terminal domain and with YTM1 via a high-affinity interaction between the seven-bladed beta-propeller domains of the 2 proteins. The NOP7 complex associates with the 66S pre-ribosome. Interacts (via UBL domain) with MDN1 (via VWFA/MIDAS domain).

The protein localises to the nucleus. The protein resides in the nucleolus. It is found in the nucleoplasm. Component of the NOP7 complex, which is required for maturation of the 25S and 5.8S ribosomal RNAs and formation of the 60S ribosome. The polypeptide is Ribosome biogenesis protein YTM1 (Scheffersomyces stipitis (strain ATCC 58785 / CBS 6054 / NBRC 10063 / NRRL Y-11545) (Yeast)).